A 348-amino-acid polypeptide reads, in one-letter code: Lipooligosaccharide heptosyltransferase 2 (348 aa).

Belongs to the glycosyltransferase 9 family.

It catalyses the reaction an L-alpha-D-Hep-(1-&gt;5)-[alpha-Kdo-(2-&gt;4)]-alpha-Kdo-(2-&gt;6)-lipid A + ADP-L-glycero-beta-D-manno-heptose = an L-alpha-D-Hep-(1-&gt;3)-L-alpha-D-Hep-(1-&gt;5)-[alpha-Kdo-(2-&gt;4)]-alpha-Kdo-(2-&gt;6)-lipid A + ADP + H(+). The protein operates within bacterial outer membrane biogenesis; LOS core biosynthesis. Its function is as follows. Glycosyltransferase involved in the biosynthesis of the core oligosaccharide region of lipooligosaccharide (LOS). Catalyzes the addition of a heptose unit to the heptosyl-Kdo2-lipid A module. In Haemophilus ducreyi (strain 35000HP / ATCC 700724), this protein is Lipooligosaccharide heptosyltransferase 2.